We begin with the raw amino-acid sequence, 598 residues long: NADH-quinone oxidoreductase subunit C/D (598 aa).

Residues 1–189 (MTDQIAQNSA…DPYVLTKQKE (189 aa)) are NADH dehydrogenase I subunit C. Residues 213–598 (DFMFLNLGPN…IDFVMSDVDR (386 aa)) are NADH dehydrogenase I subunit D.

In the N-terminal section; belongs to the complex I 30 kDa subunit family. This sequence in the C-terminal section; belongs to the complex I 49 kDa subunit family. NDH-1 is composed of 13 different subunits. Subunits NuoB, CD, E, F, and G constitute the peripheral sector of the complex.

The protein resides in the cell inner membrane. It catalyses the reaction a quinone + NADH + 5 H(+)(in) = a quinol + NAD(+) + 4 H(+)(out). In terms of biological role, NDH-1 shuttles electrons from NADH, via FMN and iron-sulfur (Fe-S) centers, to quinones in the respiratory chain. The immediate electron acceptor for the enzyme in this species is believed to be ubiquinone. Couples the redox reaction to proton translocation (for every two electrons transferred, four hydrogen ions are translocated across the cytoplasmic membrane), and thus conserves the redox energy in a proton gradient. The sequence is that of NADH-quinone oxidoreductase subunit C/D from Proteus mirabilis (strain HI4320).